The following is a 389-amino-acid chain: Equilibrative nucleotide transporter 8 (389 aa).

10 consecutive transmembrane segments (helical) span residues 19 to 39 (VAYV…NALI), 57 to 77 (TFTV…MTWN), 87 to 107 (NLGF…DWVW), 119 to 139 (LMVG…GSLI), 150 to 170 (MQAI…LRIA), 187 to 207 (HSYF…CNVL), 238 to 258 (WPAS…PGFI), 266 to 286 (LLQS…DFVG), 331 to 351 (VVVL…VLMI), and 367 to 387 (IFMV…GWLW).

Belongs to the SLC29A/ENT transporter (TC 2.A.57) family. In terms of tissue distribution, expressed in stems, flowers and siliques.

The protein localises to the cell membrane. Functionally, may be involved in nucleoside transport. In Arabidopsis thaliana (Mouse-ear cress), this protein is Equilibrative nucleotide transporter 8 (ETN8).